The sequence spans 333 residues: Glyceraldehyde-3-phosphate dehydrogenase (333 aa).

Ser-1 is subject to N-acetylserine. Residues 10–11, Asp-31, and Met-76 each bind NAD(+); that span reads RI. D-glyceraldehyde 3-phosphate-binding positions include 147-149, Thr-178, 207-208, and Arg-230; these read SCT and TG. The active-site Nucleophile is the Cys-148. An NAD(+)-binding site is contributed by Asn-312.

The protein belongs to the glyceraldehyde-3-phosphate dehydrogenase family. As to quaternary structure, homotetramer.

Its subcellular location is the cytoplasm. It carries out the reaction D-glyceraldehyde 3-phosphate + phosphate + NAD(+) = (2R)-3-phospho-glyceroyl phosphate + NADH + H(+). Its pathway is carbohydrate degradation; glycolysis; pyruvate from D-glyceraldehyde 3-phosphate: step 1/5. The sequence is that of Glyceraldehyde-3-phosphate dehydrogenase from Panulirus versicolor (Painted spiny lobster).